Consider the following 370-residue polypeptide: Proto-oncogene Wnt-1 (370 aa).

The N-terminal stretch at M1–A27 is a signal peptide. An N-linked (GlcNAc...) asparagine glycan is attached at N29. Disulfide bonds link C93–C104, C143–C151, C153–C170, C218–C232, C220–C227, C299–C330, C315–C325, C329–C369, C345–C360, C347–C357, and C352–C353. S224 carries O-palmitoleoyl serine; by PORCN lipidation. 2 N-linked (GlcNAc...) asparagine glycosylation sites follow: N316 and N346. N359 is a glycosylation site (N-linked (GlcNAc...) asparagine).

Belongs to the Wnt family. As to quaternary structure, forms a soluble 1:1 complex with AFM; this prevents oligomerization and is required for prolonged biological activity. The complex with AFM may represent the physiological form in body fluids. Interacts with PORCN. Interacts with RSPO1, RSPO2 and RSPO3. Interacts with WLS. In terms of processing, palmitoleoylation is required for efficient binding to frizzled receptors. Palmitoleoylation is necessary for proper trafficking to cell surface. Depalmitoleoylated by NOTUM, leading to inhibit Wnt signaling pathway.

The protein localises to the secreted. Its subcellular location is the extracellular space. It localises to the extracellular matrix. In terms of biological role, ligand for members of the frizzled family of seven transmembrane receptors. Acts in the canonical Wnt signaling pathway by promoting beta-catenin-dependent transcriptional activation. In some developmental processes, is also a ligand for the coreceptor RYK, thus triggering Wnt signaling. Plays an essential role in the development of the embryonic brain and central nervous system (CNS). Has a role in osteoblast function, bone development and bone homeostasis. In Homo sapiens (Human), this protein is Proto-oncogene Wnt-1 (WNT1).